The following is a 495-amino-acid chain: Muscle LIM protein Mlp84B (495 aa).

Residues 12-63 (CPRCGKSVYAAEERLAGGYVFHKNCFKCGMCNKSLDSTNCTEHERELYCKTC) enclose the LIM zinc-binding 1 domain. Positions 66-71 (RKFGPK) match the Nuclear localization signal motif. The LIM zinc-binding 2 domain occupies 120–172 (CPRCGGYVYAAEQMLARGRSWHKECFKCGTCKKGLDSILCCEAPDKNIYCKGC). The short motif at 175–180 (KKFGPK) is the Nuclear localization signal element. 3 LIM zinc-binding domains span residues 222-274 (CPRC…CRTC), 325-377 (CPRC…CRAC), and 421-473 (CPRC…CRAC).

In terms of tissue distribution, in the embryo, expression is restricted to the somatic, visceral, and pharyngeal muscles. Within the somatic musculature, expression is localized at the ends of muscles fibers at the point of attachment to the epidermis (at protein level). There is no expression in cardiac mesoderm or in fat body.

It localises to the cytoplasm. The protein localises to the nucleus. In terms of biological role, plays a role in cell differentiation late in myogenesis. Transcription factor Mef2 is essential for expression. This chain is Muscle LIM protein Mlp84B, found in Drosophila melanogaster (Fruit fly).